The following is a 450-amino-acid chain: Ribulose bisphosphate carboxylase large chain (450 aa).

The residue at position 4 (Lys-4) is an N6,N6,N6-trimethyllysine. Substrate-binding residues include Asn-113 and Thr-163. Lys-165 functions as the Proton acceptor in the catalytic mechanism. Lys-167 contributes to the substrate binding site. Mg(2+)-binding residues include Lys-191, Asp-193, and Glu-194. N6-carboxylysine is present on Lys-191. His-284 acts as the Proton acceptor in catalysis. Arg-285, His-317, and Ser-369 together coordinate substrate.

It belongs to the RuBisCO large chain family. Type I subfamily. In terms of assembly, heterohexadecamer of 8 large chains and 8 small chains; disulfide-linked. The disulfide link is formed within the large subunit homodimers. Mg(2+) is required as a cofactor. In terms of processing, the disulfide bond which can form in the large chain dimeric partners within the hexadecamer appears to be associated with oxidative stress and protein turnover.

The protein localises to the plastid. It is found in the chloroplast. The enzyme catalyses 2 (2R)-3-phosphoglycerate + 2 H(+) = D-ribulose 1,5-bisphosphate + CO2 + H2O. It catalyses the reaction D-ribulose 1,5-bisphosphate + O2 = 2-phosphoglycolate + (2R)-3-phosphoglycerate + 2 H(+). In terms of biological role, ruBisCO catalyzes two reactions: the carboxylation of D-ribulose 1,5-bisphosphate, the primary event in carbon dioxide fixation, as well as the oxidative fragmentation of the pentose substrate in the photorespiration process. Both reactions occur simultaneously and in competition at the same active site. This is Ribulose bisphosphate carboxylase large chain from Sedum rubrotinctum (Jelly bean plant).